We begin with the raw amino-acid sequence, 227 residues long: Homeobox-leucine zipper protein ATHB-54 (227 aa).

Positions E65–Q124 form a DNA-binding region, homeobox. Residues L125–L153 are leucine-zipper. The interval I175 to E198 is disordered.

It belongs to the HD-ZIP homeobox family. Class I subfamily. As to expression, predominantly expressed in flowers and siliques.

It localises to the nucleus. Probable transcription factor. This chain is Homeobox-leucine zipper protein ATHB-54 (ATHB-54), found in Arabidopsis thaliana (Mouse-ear cress).